The chain runs to 770 residues: Capsid protein (770 aa).

A compositionally biased stretch (polar residues) spans 647 to 656 (MQQQPTTTDI). Disordered regions lie at residues 647-678 (MQQQ…QEGE) and 697-717 (WEDS…TQTV). The segment covering 666–678 (RDTEVYHSSQEGE) has biased composition (basic and acidic residues). Over residues 703 to 717 (EESGSQSSEEETQTV) the composition is skewed to low complexity.

It belongs to the anelloviridae capsid protein family.

Its subcellular location is the virion. Functionally, self assemble to form an icosahedral capsid. In Torque teno virus (isolate Human/Japan/TRM1/1999) (TTV), this protein is Capsid protein.